A 163-amino-acid polypeptide reads, in one-letter code: Nucleotide-binding protein MAP_4063c (163 aa).

The protein belongs to the YajQ family.

In terms of biological role, nucleotide-binding protein. The polypeptide is Nucleotide-binding protein MAP_4063c (Mycolicibacterium paratuberculosis (strain ATCC BAA-968 / K-10) (Mycobacterium paratuberculosis)).